Reading from the N-terminus, the 194-residue chain is Large ribosomal subunit protein eL15 (194 aa).

Positions 162–173 (KTSAGRRARGLH) are enriched in basic residues. A disordered region spans residues 162–194 (KTSAGRRARGLHNRGTGTEKCRPSLTSHKNQGK). Positions 185-194 (SLTSHKNQGK) are enriched in polar residues.

The protein belongs to the eukaryotic ribosomal protein eL15 family.

The sequence is that of Large ribosomal subunit protein eL15 from Methanocorpusculum labreanum (strain ATCC 43576 / DSM 4855 / Z).